We begin with the raw amino-acid sequence, 458 residues long: Cysteine--tRNA ligase (458 aa).

Cysteine 29 lines the Zn(2+) pocket. The 'HIGH' region signature appears at 31–41 (PTVYDNPHIGN). Positions 214, 239, and 243 each coordinate Zn(2+). Residues 272 to 276 (KMSKS) carry the 'KMSKS' region motif. ATP is bound at residue lysine 275.

Belongs to the class-I aminoacyl-tRNA synthetase family. As to quaternary structure, monomer. Zn(2+) serves as cofactor.

Its subcellular location is the cytoplasm. It carries out the reaction tRNA(Cys) + L-cysteine + ATP = L-cysteinyl-tRNA(Cys) + AMP + diphosphate. The protein is Cysteine--tRNA ligase of Rickettsia bellii (strain OSU 85-389).